The primary structure comprises 173 residues: Alpha-crystallin A chain (173 aa).

Position 1 is an N-acetylmethionine (M1). The 111-residue stretch at L52–S162 folds into the sHSP domain. Zn(2+)-binding residues include H100, E102, H107, and H154. Residues S142–S173 are disordered. The span at S153–P167 shows a compositional bias: basic and acidic residues. S162 carries O-linked (GlcNAc) serine glycosylation.

The protein belongs to the small heat shock protein (HSP20) family. In terms of assembly, heteropolymer composed of three CRYAA and one CRYAB subunits. Inter-subunit bridging via zinc ions enhances stability, which is crucial as there is no protein turn over in the lens. Can also form homodimers and homotetramers (dimers of dimers) which serve as the building blocks of homooligomers. Within homooligomers, the zinc-binding motif is created from residues of 3 different molecules. His-100 and Glu-102 from one molecule are ligands of the zinc ion, and His-107 and His-154 residues from additional molecules complete the site with tetrahedral coordination geometry.

It is found in the cytoplasm. Its subcellular location is the nucleus. Contributes to the transparency and refractive index of the lens. May act as a chaperone, preventing aggregation of various proteins under a wide range of stress conditions. The protein is Alpha-crystallin A chain (CRYAA) of Gallus gallus (Chicken).